Reading from the N-terminus, the 30-residue chain is Hementerin (30 aa).

Ca(2+) is required as a cofactor.

It is found in the secreted. Fibrino(geno)lytic activity inhibited by EDTA but not by PMSF, E-64, 6-AHA and aprotinin. Functionally, cleaves fibrinogen Aalpha (FGA), gamma (FGG) and Bbeta (FGB) chains. Degrades cross-linked fibrin. Has no amidolytic, plasminogenolytic or caseinolytic activity. Inhibits platelet aggregation induced by collagen (IC(50)=7.5ug/ml) and various other agonists, presumably via activation of a nitridergic pathway. Inhibition is accompanied by reduced ATP release from and surface expression of SELP and CD63 on platelets as well as increased intracellular levels of Ca(2+), cGMP and nitric oxide synthase activity. This chain is Hementerin, found in Haementeria depressa (Leech).